The primary structure comprises 220 residues: Nucleolar protein 3 (220 aa).

Gly-2 carries the N-myristoyl glycine lipid modification. One can recognise a CARD domain in the interval 4–95; sequence VQERPSETID…MPDPAWDWQH (92 aa). The tract at residues 20–70 is essential for interaction with BAX; the sequence is VETLQADSGLLLDALVARGVLTGPEYEALDALPDAERRVRRLLLLVQSKGE. Positions 111-220 are disordered; it reads GHWTPEAPSS…FQEEDESEDS (110 aa). Residue Thr-149 is modified to Phosphothreonine; by CK2. The segment covering 152–220 has biased composition (acidic residues); it reads EPELEAEATE…FQEEDESEDS (69 aa).

Oligomerizes (via CARD doamin). Interacts (via CARD domain) with CASP2; inhibits CASP2 activity in a phosphorylation-dependent manner. Interacts with CASP8; decreases CASP8 activity in a mitochondria localization- and phosphorylation-dependent manner and this interaction is dissociated by calcium. Interacts with TFPT; translocates NOL3 into the nucleus and negatively regulated TFPT-induced cell death. Interacts directly (via CARD domain) with FAS and FADD (via DED domain); inhibits death-inducing signaling complex (DISC) assembly by inhibiting the increase in FAS-FADD binding induced by FAS activation. Interacts (via CARD domain) with BAX (via a C-terminal 33 residues); inhibits BAX activation and translocation and consequently cytochrome c release from mitochondria. Interacts with PPM1G; may dephosphorylate NOL3. Interacts (via CARD domain) with BBC3 (via BH3 domain); preventing the association of BBC3 with BCL2 and resulting in activation of CASP8. Interacts (via CARD domain) with BAD(via BH3 domain); preventing the association of BAD with BCL2. Interacts directly (via CARD domain) with TNFRSF1A; inhibits TNF-signaling pathway. Post-translationally, phosphorylation at Thr-149 is required for its antiapoptotic effect by blocking death-inducing signaling complex death-inducing signaling complex (DISC) activity through the control of interaction with CASP8. Phosphorylation at Thr-149 results in translocation to mitochondria and this translocation enables the binding to CASP8. Dephosphorylated at Thr-149 by calcineurin; doesn't inhibit the association between FADD and CASP8 and the consequent apoptosis. Polyubiquitinated by MDM2; promoting proteasomal-dependent degradation in response to apoptotic stimuli.

The protein resides in the cytoplasm. The protein localises to the mitochondrion. Its subcellular location is the sarcoplasmic reticulum. It is found in the membrane. Its function is as follows. Apoptosis repressor that blocks multiple modes of cell death. Inhibits extrinsic apoptotic pathways through two different ways. Firstly by interacting with FAS and FADD upon FAS activation blocking death-inducing signaling complex (DISC) assembly. Secondly by interacting with CASP8 in a mitochondria localization- and phosphorylation-dependent manner, limiting the amount of soluble CASP8 available for DISC-mediated activation. Inhibits intrinsic apoptotic pathway in response to a wide range of stresses, through its interaction with BAX resulting in BAX inactivation, preventing mitochondrial dysfunction and release of pro-apoptotic factors. Inhibits calcium-mediated cell death by functioning as a cytosolic calcium buffer, dissociating its interaction with CASP8 and maintaining calcium homeostasis. Negatively regulates oxidative stress-induced apoptosis by phosphorylation-dependent suppression of the mitochondria-mediated intrinsic pathway, by blocking CASP2 activation and BAX translocation. Negatively regulates hypoxia-induced apoptosis in part by inhibiting the release of cytochrome c from mitochondria in a caspase-independent manner. Also inhibits TNF-induced necrosis by preventing TNF-signaling pathway through TNFRSF1A interaction abrogating the recruitment of RIPK1 to complex I. Finally through its role as apoptosis repressor, promotes vascular remodeling through inhibition of apoptosis and stimulation of proliferation, in response to hypoxia. Inhibits too myoblast differentiation through caspase inhibition. The sequence is that of Nucleolar protein 3 (Nol3) from Mus musculus (Mouse).